Consider the following 238-residue polypeptide: Female-specific protein 800 (238 aa).

Residues 35-50 show a composition bias toward low complexity; sequence YSYHHTYNNNNQGNYQ. 2 disordered regions span residues 35-112 and 166-204; these read YSYH…KGGS and NKRKITKSEKNGRYIKKDHMNNRDSNTNINEKPEYSKSP. The span at 97-106 shows a compositional bias: polar residues; it reads RNDQIQSRGN. The segment covering 171–187 has biased composition (basic and acidic residues); the sequence is TKSEKNGRYIKKDHMNN.

In terms of biological role, FS800 is likely to have some function in the production or maintenance of the schistosome egg. The polypeptide is Female-specific protein 800 (Schistosoma mansoni (Blood fluke)).